Reading from the N-terminus, the 416-residue chain is Prostate tumor-overexpressed gene 1 protein homolog (416 aa).

The segment at 1-53 (MVRPRRAPHRSGAGGPLGGRGRPPRPLVVRAVRSRSWPAGPRGPQPPRIRARS) is disordered. Positions 12 to 21 (GAGGPLGGRG) are enriched in gly residues. Over residues 27 to 36 (LVVRAVRSRS) the composition is skewed to low complexity. Ser53 is subject to Phosphoserine. Positions 184–416 (NGFAGCMLFP…QEQQQRGMGG (233 aa)) are interaction with FLOT1.

Belongs to the Mediator complex subunit 25 family. PTOV1 subfamily. As to quaternary structure, may interact with CREBBP. Interacts with FLOT1. Post-translationally, ubiquitinated by the CRL2(KLHDC2) complex, which recognizes the diglycine (Gly-Gly) at the C-terminus, leading to its degradation. Ubiquitinated by the CRL2(APPBP2) complex, which recognizes the Arg-Xaa-Xaa-Gly sequence at the C-terminus, leading to its degradation.

Its subcellular location is the cytoplasm. The protein localises to the nucleus. It localises to the cell membrane. The protein resides in the perinuclear region. Functionally, may activate transcription. Required for nuclear translocation of FLOT1. Promotes cell proliferation. This is Prostate tumor-overexpressed gene 1 protein homolog (Ptov1) from Rattus norvegicus (Rat).